Here is a 262-residue protein sequence, read N- to C-terminus: Hydroxyethylthiazole kinase (262 aa).

Position 50 (Met50) interacts with substrate. The ATP site is built by Arg125 and Thr171. A substrate-binding site is contributed by Gly198.

Belongs to the Thz kinase family. Mg(2+) serves as cofactor.

The catalysed reaction is 5-(2-hydroxyethyl)-4-methylthiazole + ATP = 4-methyl-5-(2-phosphooxyethyl)-thiazole + ADP + H(+). Its pathway is cofactor biosynthesis; thiamine diphosphate biosynthesis; 4-methyl-5-(2-phosphoethyl)-thiazole from 5-(2-hydroxyethyl)-4-methylthiazole: step 1/1. In terms of biological role, catalyzes the phosphorylation of the hydroxyl group of 4-methyl-5-beta-hydroxyethylthiazole (THZ). This Escherichia coli O6:H1 (strain CFT073 / ATCC 700928 / UPEC) protein is Hydroxyethylthiazole kinase.